Reading from the N-terminus, the 549-residue chain is Oxygen-dependent choline dehydrogenase (549 aa).

4-33 (DYIIIGSGSAGSALAHRLSEDSRNSVIVLE) lines the FAD pocket. His465 functions as the Proton acceptor in the catalytic mechanism.

This sequence belongs to the GMC oxidoreductase family. Requires FAD as cofactor.

It catalyses the reaction choline + A = betaine aldehyde + AH2. It carries out the reaction betaine aldehyde + NAD(+) + H2O = glycine betaine + NADH + 2 H(+). Its pathway is amine and polyamine biosynthesis; betaine biosynthesis via choline pathway; betaine aldehyde from choline (cytochrome c reductase route): step 1/1. Functionally, involved in the biosynthesis of the osmoprotectant glycine betaine. Catalyzes the oxidation of choline to betaine aldehyde and betaine aldehyde to glycine betaine at the same rate. The sequence is that of Oxygen-dependent choline dehydrogenase from Sinorhizobium fredii (strain NBRC 101917 / NGR234).